Here is a 329-residue protein sequence, read N- to C-terminus: DNA-directed RNA polymerase subunit alpha (329 aa).

The segment at 1 to 235 (MQGSVTEFLK…EQLEAFVDLR (235 aa)) is alpha N-terminal domain (alpha-NTD). The segment at 249–329 (FDPILLRPVD…NWPPASIADE (81 aa)) is alpha C-terminal domain (alpha-CTD).

The protein belongs to the RNA polymerase alpha chain family. As to quaternary structure, homodimer. The RNAP catalytic core consists of 2 alpha, 1 beta, 1 beta' and 1 omega subunit. When a sigma factor is associated with the core the holoenzyme is formed, which can initiate transcription.

The catalysed reaction is RNA(n) + a ribonucleoside 5'-triphosphate = RNA(n+1) + diphosphate. DNA-dependent RNA polymerase catalyzes the transcription of DNA into RNA using the four ribonucleoside triphosphates as substrates. The chain is DNA-directed RNA polymerase subunit alpha from Yersinia pestis bv. Antiqua (strain Antiqua).